The sequence spans 85 residues: Progonadoliberin-2 (85 aa).

The N-terminal stretch at 1–23 (MCVSRLVLLFGLLLCVGAQLSNA) is a signal peptide. Q24 is subject to Pyrrolidone carboxylic acid. A Glycine amide modification is found at G33.

The protein belongs to the GnRH family.

The protein resides in the secreted. Functionally, stimulates the secretion of gonadotropins. This Dicentrarchus labrax (European seabass) protein is Progonadoliberin-2 (gnrh2).